The chain runs to 206 residues: Small ribosomal subunit protein uS4 (206 aa).

Positions 98-155 (TRLDNVVYRLGWALSRAQARQIVSHGKIAVNGKRVNIPSYNLKPGDVVELLDKDLIPV) constitute an S4 RNA-binding domain.

The protein belongs to the universal ribosomal protein uS4 family. In terms of assembly, part of the 30S ribosomal subunit. Contacts protein S5. The interaction surface between S4 and S5 is involved in control of translational fidelity.

Functionally, one of the primary rRNA binding proteins, it binds directly to 16S rRNA where it nucleates assembly of the body of the 30S subunit. Its function is as follows. With S5 and S12 plays an important role in translational accuracy. The polypeptide is Small ribosomal subunit protein uS4 (Dictyoglomus turgidum (strain DSM 6724 / Z-1310)).